Reading from the N-terminus, the 310-residue chain is MKIANSITELIGNTPLVKLNRLTEGLKAEVAVKLEFFNPGSSVKDRIAEAMIEGAEKAGKINKNTVIVEATSGNTGVGLAMVCAARGYKLAITMPESMSKERKMLLRAFGAELILTPAAEGMAGAIAKAKSLVDAHPDTYFMPRQFDNEANPEVHRKTTAEEIWRDTDGKVDVFVAGVGTGGTITGVGEVLKKYKPEVKVVAVEPEASPVLSGGEKGPHPIQGIGAGFIPTVLNTKIYDSITKVSNEAAFETARAIAEKEGILVGISSGAAVWSALQLAKQPENEGKLIVVLLPSYGERYLSTPLFADLA.

The residue at position 44 (K44) is an N6-(pyridoxal phosphate)lysine. Residues N74, 179-183 (GTGGT), and S267 contribute to the pyridoxal 5'-phosphate site.

This sequence belongs to the cysteine synthase/cystathionine beta-synthase family. Pyridoxal 5'-phosphate serves as cofactor.

It catalyses the reaction O-acetyl-L-serine + hydrogen sulfide = L-cysteine + acetate. The protein operates within amino-acid biosynthesis; L-cysteine biosynthesis; L-cysteine from L-serine: step 2/2. This chain is Cysteine synthase (cysK), found in Neisseria meningitidis serogroup B (strain ATCC BAA-335 / MC58).